Consider the following 59-residue polypeptide: Preprotein translocase subunit SecG (59 aa).

Residues 1 to 35 (MPSSKKKKEDVPIASMAGLVRYYESEKEKVKISPK) are Cytoplasmic-facing. The helical transmembrane segment at 36 to 56 (VVVVASIVLIAGVIIASFIIP) threads the bilayer. Over 57–59 (PPL) the chain is Extracellular.

The protein belongs to the SEC61-beta family. Component of the protein translocase complex. Heterotrimer consisting of alpha (SecY), beta (SecG) and gamma (SecE) subunits. Can form oligomers of the heterotrimer.

It is found in the cell membrane. Involved in protein export. The function of the beta subunit is unknown, but it may be involved in stabilization of the trimeric complex. The sequence is that of Preprotein translocase subunit SecG from Sulfolobus acidocaldarius (strain ATCC 33909 / DSM 639 / JCM 8929 / NBRC 15157 / NCIMB 11770).